A 437-amino-acid chain; its full sequence is ATP-dependent RNA helicase RhlB (437 aa).

The short motif at 9-37 (QKFADLGLQPQVTEGLEKKGFEYCTPIQA) is the Q motif element. Residues 40–219 (LPVLLTGQDI…FEHMHNPEHV (180 aa)) form the Helicase ATP-binding domain. Residue 53–60 (AQTGTGKT) participates in ATP binding. Residues 165-168 (DEAD) carry the DEAD box motif. Residues 245–390 (ALLQTLIEEE…VSEYDASALI (146 aa)) form the Helicase C-terminal domain. The tract at residues 397–437 (IRMRAPRVQQRRTNTGGTRSGNRKPQGRRPRQPRQSAPKQS) is disordered. The span at 417 to 428 (GNRKPQGRRPRQ) shows a compositional bias: basic residues.

It belongs to the DEAD box helicase family. RhlB subfamily. As to quaternary structure, component of the RNA degradosome, which is a multiprotein complex involved in RNA processing and mRNA degradation.

The protein localises to the cytoplasm. The catalysed reaction is ATP + H2O = ADP + phosphate + H(+). DEAD-box RNA helicase involved in RNA degradation. Has RNA-dependent ATPase activity and unwinds double-stranded RNA. This is ATP-dependent RNA helicase RhlB from Vibrio parahaemolyticus serotype O3:K6 (strain RIMD 2210633).